The sequence spans 381 residues: Creatine kinase M-type (381 aa).

One can recognise a Phosphagen kinase N-terminal domain in the interval 11-98; that stretch reads KLNFKAEEEY…FDPIIQDRHG (88 aa). The 243-residue stretch at 125–367 folds into the Phosphagen kinase C-terminal domain; it reads YVLSSRVRTG…KLMVEMEKKL (243 aa). Residue 128–132 coordinates ATP; the sequence is SSRVR. Phosphoserine is present on S164. T166 carries the phosphothreonine modification. S178 is subject to Phosphoserine. At T180 the chain carries Phosphothreonine. H191 lines the ATP pocket. Phosphoserine is present on S199. Residues R236 and R292 each contribute to the ATP site. 2 positions are modified to phosphothreonine: T313 and T322. ATP is bound by residues 320 to 325 and D335; that span reads RGTGGV. S372 is modified (phosphoserine).

The protein belongs to the ATP:guanido phosphotransferase family. As to quaternary structure, dimer of identical or non-identical chains, which can be either B (brain type) or M (muscle type). With MM being the major form in skeletal muscle and myocardium, MB existing in myocardium, and BB existing in many tissues, especially brain.

It is found in the cytoplasm. It carries out the reaction creatine + ATP = N-phosphocreatine + ADP + H(+). Reversibly catalyzes the transfer of phosphate between ATP and various phosphogens (e.g. creatine phosphate). Creatine kinase isoenzymes play a central role in energy transduction in tissues with large, fluctuating energy demands, such as skeletal muscle, heart, brain and spermatozoa. The polypeptide is Creatine kinase M-type (CKM) (Bos taurus (Bovine)).